A 366-amino-acid polypeptide reads, in one-letter code: Isocitrate dehydrogenase [NAD] subunit alpha, mitochondrial (366 aa).

Residues M1–F27 constitute a mitochondrion transit peptide. Residue K77 is modified to N6-succinyllysine. The residue at position 101 (T101) is a Phosphothreonine. Substrate is bound by residues R115, R125, and R146. K223 is subject to N6-acetyllysine. Mg(2+)-binding residues include D233, D257, and D261. Residue K343 is modified to N6-acetyllysine; alternate. N6-succinyllysine; alternate is present on K343. K350 carries the N6-succinyllysine modification.

It belongs to the isocitrate and isopropylmalate dehydrogenases family. In terms of assembly, heterooligomer of subunits alpha (IDH3A), beta (IDH3B), and gamma (IDH3G) in the apparent ratio of 2:1:1. The heterodimer containing one IDH3A and one IDH3B subunit and the heterodimer containing one IDH3A and one IDH3G subunit assemble into a heterotetramer (which contains two subunits of IDH3A, one of IDH3B and one of IDH3G) and further into the heterooctamer. Mg(2+) is required as a cofactor. It depends on Mn(2+) as a cofactor.

The protein localises to the mitochondrion. It catalyses the reaction D-threo-isocitrate + NAD(+) = 2-oxoglutarate + CO2 + NADH. With respect to regulation, the heterotetramer and the heterodimer composed of IDH3A and IDH3G subunits can be allosterically activated by citrate (CIT) or/and ADP, and the two activators can act independently or synergistically. The heterodimer composed of IDH3A and IDH3B subunits cannot be allosterically regulated and the allosteric regulation of the heterotetramer is through the IDH3G subunit and not the IDH3B subunit. The IDH3G subunit contains the allosteric site which consists of a CIT-binding site and an ADP-binding site, and the binding of CIT and ADP causes conformational changes at the allosteric site which are transmitted to the active site in the catalytic subunit (IDH3A) through a cascade of conformational changes at the heterodimer interface, leading to stabilization of the isocitrate-binding at the active site and thus activation of the enzyme. ATP can activate the heterotetramer and the heterodimer composed of IDH3A and IDH3G subunits at low concentrations but inhibits their activities at high concentrations, whereas ATP exhibits only inhibitory effect on the heterodimer composed of IDH3A and IDH3B subunits. In terms of biological role, catalytic subunit of the enzyme which catalyzes the decarboxylation of isocitrate (ICT) into alpha-ketoglutarate. The heterodimer composed of the alpha (IDH3A) and beta (IDH3B) subunits and the heterodimer composed of the alpha (IDH3A) and gamma (IDH3G) subunits, have considerable basal activity but the full activity of the heterotetramer (containing two subunits of IDH3A, one of IDH3B and one of IDH3G) requires the assembly and cooperative function of both heterodimers. The polypeptide is Isocitrate dehydrogenase [NAD] subunit alpha, mitochondrial (Pongo abelii (Sumatran orangutan)).